A 309-amino-acid polypeptide reads, in one-letter code: Homoserine O-succinyltransferase (309 aa).

Residue cysteine 142 is the Acyl-thioester intermediate of the active site. Substrate-binding residues include lysine 163 and serine 192. Histidine 235 serves as the catalytic Proton acceptor. Residue glutamate 237 is part of the active site. Arginine 249 contributes to the substrate binding site.

This sequence belongs to the MetA family.

The protein resides in the cytoplasm. The catalysed reaction is L-homoserine + succinyl-CoA = O-succinyl-L-homoserine + CoA. It participates in amino-acid biosynthesis; L-methionine biosynthesis via de novo pathway; O-succinyl-L-homoserine from L-homoserine: step 1/1. Transfers a succinyl group from succinyl-CoA to L-homoserine, forming succinyl-L-homoserine. This is Homoserine O-succinyltransferase from Enterobacter sp. (strain 638).